A 431-amino-acid polypeptide reads, in one-letter code: uncharacterized protein (431 aa).

2 consecutive 4Fe-4S ferredoxin-type domains span residues 336–367 and 362–391; these read VRPV…NGLD and IDNG…MDTG.

This is an uncharacterized protein from Methanothermobacter thermautotrophicus (strain ATCC 29096 / DSM 1053 / JCM 10044 / NBRC 100330 / Delta H) (Methanobacterium thermoautotrophicum).